A 345-amino-acid polypeptide reads, in one-letter code: Nicotinate-nucleotide--dimethylbenzimidazole phosphoribosyltransferase (345 aa).

Glu312 serves as the catalytic Proton acceptor.

This sequence belongs to the CobT family.

The enzyme catalyses 5,6-dimethylbenzimidazole + nicotinate beta-D-ribonucleotide = alpha-ribazole 5'-phosphate + nicotinate + H(+). The protein operates within nucleoside biosynthesis; alpha-ribazole biosynthesis; alpha-ribazole from 5,6-dimethylbenzimidazole: step 1/2. Functionally, catalyzes the synthesis of alpha-ribazole-5'-phosphate from nicotinate mononucleotide (NAMN) and 5,6-dimethylbenzimidazole (DMB). This is Nicotinate-nucleotide--dimethylbenzimidazole phosphoribosyltransferase from Bacteroides fragilis (strain YCH46).